Consider the following 98-residue polypeptide: NADH-ubiquinone oxidoreductase chain 4L (98 aa).

Transmembrane regions (helical) follow at residues 1–21 (MPII…GMLI), 29–49 (SLLC…LMAL), and 58–78 (IVPV…LALL).

Belongs to the complex I subunit 4L family. As to quaternary structure, core subunit of respiratory chain NADH dehydrogenase (Complex I) which is composed of 45 different subunits.

Its subcellular location is the mitochondrion inner membrane. The catalysed reaction is a ubiquinone + NADH + 5 H(+)(in) = a ubiquinol + NAD(+) + 4 H(+)(out). In terms of biological role, core subunit of the mitochondrial membrane respiratory chain NADH dehydrogenase (Complex I) which catalyzes electron transfer from NADH through the respiratory chain, using ubiquinone as an electron acceptor. Part of the enzyme membrane arm which is embedded in the lipid bilayer and involved in proton translocation. The sequence is that of NADH-ubiquinone oxidoreductase chain 4L (MT-ND4L) from Semnopithecus entellus (Northern plains gray langur).